An 88-amino-acid polypeptide reads, in one-letter code: Acylphosphatase (88 aa).

An Acylphosphatase-like domain is found at 3–88; it reads AVDVLISGRV…RAGHQGFEVR (86 aa). Active-site residues include R18 and N36.

Belongs to the acylphosphatase family.

The catalysed reaction is an acyl phosphate + H2O = a carboxylate + phosphate + H(+). This Methanocella arvoryzae (strain DSM 22066 / NBRC 105507 / MRE50) protein is Acylphosphatase (acyP).